The following is a 949-amino-acid chain: Translation initiation factor IF-2 (949 aa).

Disordered stretches follow at residues phenylalanine 50 to arginine 206 and glutamine 220 to lysine 359. Composition is skewed to basic and acidic residues over residues glutamate 52 to lysine 84 and phenylalanine 104 to serine 143. Composition is skewed to polar residues over residues lysine 144–glutamine 154 and glycine 164–proline 180. The segment covering asparagine 187 to arginine 206 has biased composition (low complexity). Residues tyrosine 224–proline 275 are compositionally biased toward basic and acidic residues. Low complexity predominate over residues lysine 319 to asparagine 336. The region spanning glutamate 450 to lysine 619 is the tr-type G domain. The G1 stretch occupies residues glycine 459–threonine 466. Glycine 459–threonine 466 contributes to the GTP binding site. Residues glycine 484–histidine 488 form a G2 region. Positions aspartate 505–glycine 508 are G3. GTP contacts are provided by residues aspartate 505–histidine 509 and asparagine 559–aspartate 562. The G4 stretch occupies residues asparagine 559–aspartate 562. The interval serine 595–lysine 597 is G5.

The protein belongs to the TRAFAC class translation factor GTPase superfamily. Classic translation factor GTPase family. IF-2 subfamily.

The protein resides in the cytoplasm. In terms of biological role, one of the essential components for the initiation of protein synthesis. Protects formylmethionyl-tRNA from spontaneous hydrolysis and promotes its binding to the 30S ribosomal subunits. Also involved in the hydrolysis of GTP during the formation of the 70S ribosomal complex. The chain is Translation initiation factor IF-2 from Streptococcus uberis (strain ATCC BAA-854 / 0140J).